The chain runs to 376 residues: MQALNTTKRLMSTKQFPLFKSLLYSSHDPADCTQVLKVHSYTPKVGADESILLRTLAFPINPSDINQLQGVYPSVPEKTLDYSTEKPAAIAGNEGVFEVMSVPQGERRLAVGDWVIPLYSNTGTWTNYQTCRDAGTLVKVNGLDLYTAATIAVNGCTAYQLVNDYVQWDPSGNEWIVQNAGTSAVSKIVTQVAQARGVKTLSVIRDRENFAEVAKELEERYGATKVISETQNNDKDFSKDELPVILGPNARVRLALNSVGGKSSGAIARKLERDGTMLTYGGMSRQPVTVPTTLLIFNGLKSLGYWITENTKRNPQSKIDTISALMRMYGDGQLQPPEADIKKIEWDVQKMNDEQLLEAVKNGIQSNGKSVVVLKW.

Catalysis depends on tyrosine 72, which acts as the Proton donor. Residues asparagine 154, 182–185 (TSAV), 205–207 (RDR), 280–283 (YGGM), 305–307 (YWI), and lysine 369 contribute to the NADP(+) site.

It belongs to the zinc-containing alcohol dehydrogenase family. Quinone oxidoreductase subfamily. Homodimer.

It is found in the mitochondrion matrix. The enzyme catalyses a 2,3-saturated acyl-[ACP] + NADP(+) = a (2E)-enoyl-[ACP] + NADPH + H(+). Catalyzes the NADPH-dependent reduction of trans-2-enoyl thioesters in mitochondrial fatty acid synthesis (fatty acid synthesis type II). Fatty acid chain elongation in mitochondria uses acyl carrier protein (ACP) as an acyl group carrier, but the enzyme accepts both ACP and CoA thioesters as substrates in vitro. Required for respiration and the maintenance of the mitochondrial compartment. The protein is Enoyl-[acyl-carrier-protein] reductase, mitochondrial (ETR1) of Eremothecium gossypii (strain ATCC 10895 / CBS 109.51 / FGSC 9923 / NRRL Y-1056) (Yeast).